The chain runs to 251 residues: Triosephosphate isomerase (251 aa).

N9–K11 is a binding site for substrate. H95 functions as the Electrophile in the catalytic mechanism. The Proton acceptor role is filled by E167. Substrate-binding positions include G173, S213, and G234–G235. The residue at position 213 (S213) is a Phosphoserine.

The protein belongs to the triosephosphate isomerase family. Homodimer.

The protein resides in the cytoplasm. It catalyses the reaction D-glyceraldehyde 3-phosphate = dihydroxyacetone phosphate. It functions in the pathway carbohydrate biosynthesis; gluconeogenesis. It participates in carbohydrate degradation; glycolysis; D-glyceraldehyde 3-phosphate from glycerone phosphate: step 1/1. In terms of biological role, involved in the gluconeogenesis. Catalyzes stereospecifically the conversion of dihydroxyacetone phosphate (DHAP) to D-glyceraldehyde-3-phosphate (G3P). In Bacillus cereus (strain B4264), this protein is Triosephosphate isomerase.